Consider the following 359-residue polypeptide: MQILADLLNTIPAIDSTAMSRAQRHIDGLLKPVGSLGKLEVLAIQLAGMPGLNGIPHVGKKAVLVMCADHGVWEEGVAISPKEVTAIQAENMTRGTTGVCVLAEQAGANVHVIDVGIDTAEPIPGLINMRVARGSGNIASAPAMSRRQAEKLLLDVICYTQELAKNGVTLFGVGELGMANTTPAAAIVSTITGRDPEEVVGIGANLPTDKLANKIDVVRRAITLNQPNPQDGVDVLAKVGGFDLVGIAGVMLGAASCGLPVLLDGFLSYAAALAACQMSPAIKPYLIPSHLSAEKGARIALSHLGLEPYLNMEMRLGEGSGAALAMPIIEAACAIYNNMGELAASNIVLPGNTTSDLNS.

Glutamate 318 serves as the catalytic Proton acceptor.

This sequence belongs to the CobT family. As to quaternary structure, homodimer.

It carries out the reaction 5,6-dimethylbenzimidazole + nicotinate beta-D-ribonucleotide = alpha-ribazole 5'-phosphate + nicotinate + H(+). It participates in nucleoside biosynthesis; alpha-ribazole biosynthesis; alpha-ribazole from 5,6-dimethylbenzimidazole: step 1/2. Catalyzes the synthesis of alpha-ribazole-5'-phosphate from nicotinate mononucleotide (NAMN) and 5,6-dimethylbenzimidazole (DMB). This is Nicotinate-nucleotide--dimethylbenzimidazole phosphoribosyltransferase from Escherichia coli O81 (strain ED1a).